The chain runs to 102 residues: Large ribosomal subunit protein uL24 (102 aa).

This sequence belongs to the universal ribosomal protein uL24 family. As to quaternary structure, part of the 50S ribosomal subunit.

One of two assembly initiator proteins, it binds directly to the 5'-end of the 23S rRNA, where it nucleates assembly of the 50S subunit. Functionally, one of the proteins that surrounds the polypeptide exit tunnel on the outside of the subunit. This is Large ribosomal subunit protein uL24 from Rhizobium rhizogenes (strain K84 / ATCC BAA-868) (Agrobacterium radiobacter).